The following is a 285-amino-acid chain: 4-diphosphocytidyl-2-C-methyl-D-erythritol kinase (285 aa).

K9 is an active-site residue. 89 to 99 (PLGAGLGGGSS) is a binding site for ATP. D131 is a catalytic residue.

It belongs to the GHMP kinase family. IspE subfamily.

The enzyme catalyses 4-CDP-2-C-methyl-D-erythritol + ATP = 4-CDP-2-C-methyl-D-erythritol 2-phosphate + ADP + H(+). It functions in the pathway isoprenoid biosynthesis; isopentenyl diphosphate biosynthesis via DXP pathway; isopentenyl diphosphate from 1-deoxy-D-xylulose 5-phosphate: step 3/6. In terms of biological role, catalyzes the phosphorylation of the position 2 hydroxy group of 4-diphosphocytidyl-2C-methyl-D-erythritol. This is 4-diphosphocytidyl-2-C-methyl-D-erythritol kinase from Thermodesulfovibrio yellowstonii (strain ATCC 51303 / DSM 11347 / YP87).